The chain runs to 343 residues: Heat-inducible transcription repressor HrcA (343 aa).

The protein belongs to the HrcA family.

Negative regulator of class I heat shock genes (grpE-dnaK-dnaJ and groELS operons). Prevents heat-shock induction of these operons. The chain is Heat-inducible transcription repressor HrcA from Thermoanaerobacter sp. (strain X514).